The sequence spans 337 residues: MASIHRPKRGSLAFSPRKRAKSHIPRFRAWPEATGEPKLQSFAGYKVGMTHVIMVDDTKNSLTQGMEISVPVTVIETPAIRVAAIRAYAEDSTGEKAIAEVWAADLDPELKRRIPIPAAGNQAEALENIGKLIEEGRVSDVRAVIYTLPKSLTGVPKKVPDIMESGISARDLGTKFEYSKTILGTLVSVTDVFKNGTLVDTAAITIGKGTQGPVKRWGIQLMKGKHSRQGSLRQVGTLGAFNPSRVSWRVPQMGQMGYHQRTEFNKRILKIGSDGEEVTPEGGFINYGLVRGDYILIKGSVPGPSKRLIRLRDPIRAKKADLGEPNILYISRESKQG.

The segment at Met1–Ala20 is disordered.

This sequence belongs to the universal ribosomal protein uL3 family. As to quaternary structure, part of the 50S ribosomal subunit. Forms a cluster with proteins L14 and L24e.

Functionally, one of the primary rRNA binding proteins, it binds directly near the 3'-end of the 23S rRNA, where it nucleates assembly of the 50S subunit. The chain is Large ribosomal subunit protein uL3 from Methanosarcina acetivorans (strain ATCC 35395 / DSM 2834 / JCM 12185 / C2A).